Reading from the N-terminus, the 523-residue chain is GMP synthase [glutamine-hydrolyzing] (523 aa).

The region spanning 8–205 (RILILDFGSQ…IRELCECEAL (198 aa)) is the Glutamine amidotransferase type-1 domain. Residue Cys-85 is the Nucleophile of the active site. Residues His-179 and Glu-181 contribute to the active site. One can recognise a GMPS ATP-PPase domain in the interval 206–398 (WTPSNIISDA…LGLPYDMVYR (193 aa)). Position 233–239 (233–239 (SGGVDSS)) interacts with ATP.

In terms of assembly, homodimer.

It catalyses the reaction XMP + L-glutamine + ATP + H2O = GMP + L-glutamate + AMP + diphosphate + 2 H(+). It functions in the pathway purine metabolism; GMP biosynthesis; GMP from XMP (L-Gln route): step 1/1. Its function is as follows. Catalyzes the synthesis of GMP from XMP. The polypeptide is GMP synthase [glutamine-hydrolyzing] (Alcanivorax borkumensis (strain ATCC 700651 / DSM 11573 / NCIMB 13689 / SK2)).